We begin with the raw amino-acid sequence, 713 residues long: MRPVSKIERTVAPFEVVSPYQPSGDQPAAIAELDRRIRAGEKDVVLLGATGTGKSATTAWMIEKLQRPTLVMAPNKTLAAQLANEFRELLPNNAVEYFVSYYDYYQPEAYVPQSDTYIEKDSSINEEVERLRHSATNSLLTRRDVVVVASVSCIYGLGTPQEYVDRMVPLRVGDEVDRDDLLRRFVDIQYTRNDLAFTRGTFRVRGDTIEIFPVYEELAVRIEMFGDEIEALSTLHPLTGEIISDDQHLYVFPASHYVAGPERLERAANDIEKELGERLTELEKQGKLLEAQRLRMRTTYDLEMLRQIGSCSGVENYSMHFDGREPGSPPNTLLDYFPDDFLLVIDESHVTVPQIGAMYEGDASRKRTLVDHGFRLPSALDNRPLKWEEFQERIGQAVYLSATPGKYELSRGDGFVEQIIRPTGLIDPEVVVKPTEGQIDDLVHEIRKRTEKDERVLVTTLTKKMAEDLTDYFLELGIQVRYLHSDVDTLRRVELLRELRAGEYDVLVGINLLREGLDLPEVSLVAILDADKEGFLRSGTSLIQTIGRAARNVSGQVHMYADKITPAMEKAIDETNRRREKQVAYNKEKGIDPQPLRKKINDIVAQIAREDIDTEQLLGSGYRQAKDGKGAKAPVPSLGGKAAAKGAKSAKGKAKETVPTDRPAAKLAEEIEELTNRMRAAAADLQFEIAARLRDEVSEMKKELRQMKEAGLA.

The Helicase ATP-binding domain maps to 35 to 421; that stretch reads RRIRAGEKDV…GDGFVEQIIR (387 aa). 48–55 serves as a coordination point for ATP; the sequence is GATGTGKS. Positions 101-124 match the Beta-hairpin motif; the sequence is YYDYYQPEAYVPQSDTYIEKDSSI. The Helicase C-terminal domain occupies 438–604; it reads QIDDLVHEIR…PLRKKINDIV (167 aa). Residues 624–663 are disordered; the sequence is QAKDGKGAKAPVPSLGGKAAAKGAKSAKGKAKETVPTDRP. A compositionally biased stretch (low complexity) spans 639–649; it reads GGKAAAKGAKS. Residues 653-663 show a composition bias toward basic and acidic residues; it reads KAKETVPTDRP. The region spanning 668–703 is the UVR domain; sequence AEEIEELTNRMRAAAADLQFEIAARLRDEVSEMKKE.

It belongs to the UvrB family. In terms of assembly, forms a heterotetramer with UvrA during the search for lesions. Interacts with UvrC in an incision complex.

The protein resides in the cytoplasm. Its function is as follows. The UvrABC repair system catalyzes the recognition and processing of DNA lesions. A damage recognition complex composed of 2 UvrA and 2 UvrB subunits scans DNA for abnormalities. Upon binding of the UvrA(2)B(2) complex to a putative damaged site, the DNA wraps around one UvrB monomer. DNA wrap is dependent on ATP binding by UvrB and probably causes local melting of the DNA helix, facilitating insertion of UvrB beta-hairpin between the DNA strands. Then UvrB probes one DNA strand for the presence of a lesion. If a lesion is found the UvrA subunits dissociate and the UvrB-DNA preincision complex is formed. This complex is subsequently bound by UvrC and the second UvrB is released. If no lesion is found, the DNA wraps around the other UvrB subunit that will check the other stand for damage. The protein is UvrABC system protein B of Streptomyces avermitilis (strain ATCC 31267 / DSM 46492 / JCM 5070 / NBRC 14893 / NCIMB 12804 / NRRL 8165 / MA-4680).